A 360-amino-acid polypeptide reads, in one-letter code: Ribosomal RNA large subunit methyltransferase M (360 aa).

S-adenosyl-L-methionine-binding positions include serine 187, 220–223 (CPGG), aspartate 239, aspartate 259, and aspartate 276. The Proton acceptor role is filled by lysine 305.

This sequence belongs to the class I-like SAM-binding methyltransferase superfamily. RNA methyltransferase RlmE family. RlmM subfamily. As to quaternary structure, monomer.

The protein localises to the cytoplasm. It carries out the reaction cytidine(2498) in 23S rRNA + S-adenosyl-L-methionine = 2'-O-methylcytidine(2498) in 23S rRNA + S-adenosyl-L-homocysteine + H(+). In terms of biological role, catalyzes the 2'-O-methylation at nucleotide C2498 in 23S rRNA. The chain is Ribosomal RNA large subunit methyltransferase M from Photobacterium profundum (strain SS9).